Consider the following 433-residue polypeptide: Adenylosuccinate synthetase (433 aa).

Residues 18–24 (GDEGKGK) and 46–48 (GHT) each bind GTP. Asp-19 serves as the catalytic Proton acceptor. Residues Asp-19 and Gly-46 each coordinate Mg(2+). IMP is bound by residues 19–22 (DEGK), 44–47 (NAGH), Thr-136, Arg-150, Gln-229, Thr-244, and Arg-308. His-47 acts as the Proton donor in catalysis. 304–310 (VTTKRMR) lines the substrate pocket. Residues Arg-310, 336–338 (KID), and 420–422 (GTG) each bind GTP.

Belongs to the adenylosuccinate synthetase family. Homodimer. Requires Mg(2+) as cofactor.

It localises to the cytoplasm. The enzyme catalyses IMP + L-aspartate + GTP = N(6)-(1,2-dicarboxyethyl)-AMP + GDP + phosphate + 2 H(+). It participates in purine metabolism; AMP biosynthesis via de novo pathway; AMP from IMP: step 1/2. Its function is as follows. Plays an important role in the de novo pathway and in the salvage pathway of purine nucleotide biosynthesis. Catalyzes the first committed step in the biosynthesis of AMP from IMP. In Schistosoma japonicum (Blood fluke), this protein is Adenylosuccinate synthetase.